A 167-amino-acid chain; its full sequence is MATSELSCEVSEENCERREAFWAEWKDLTLSTRPEEGCSLHEEDTQRHETYHQQGQCQVLVQRSPWLMMRMGILGRGLQEYQLPYQRVLPLPIFTPAKMGATKEEREDTPIQLQELLALETALGGQCVDRQEVAEITKQLPPVVPVSKPGALRRSLSRSMSQEAQRG.

Ser-39 bears the Phosphoserine mark. The disordered stretch occupies residues 144–167 (VPVSKPGALRRSLSRSMSQEAQRG). Residues 157-167 (SRSMSQEAQRG) are compositionally biased toward polar residues.

In terms of assembly, interacts with MYOZ1, MYOZ2 and MYOZ3. Interacts with CSRP3. Interacts directly with the N-terminal Ig-like domains of 2 titin (TTN) molecules. Interacts with ANKRD2; the interaction is direct. As to expression, heart and skeletal muscle.

It localises to the cytoplasm. The protein resides in the myofibril. The protein localises to the sarcomere. Functionally, muscle assembly regulating factor. Mediates the antiparallel assembly of titin (TTN) molecules at the sarcomeric Z-disk. In Homo sapiens (Human), this protein is Telethonin (TCAP).